Reading from the N-terminus, the 515-residue chain is Galactose/methyl galactoside import ATP-binding protein MglA (515 aa).

ABC transporter domains lie at 8–243 and 254–499; these read LEMR…VGRE and IPKE…AKYL. Residue 40–47 participates in ATP binding; it reads GENGAGKS.

Belongs to the ABC transporter superfamily. Galactose/methyl galactoside importer (TC 3.A.1.2.3) family. In terms of assembly, the complex is composed of one ATP-binding protein (MglA), two transmembrane proteins (MglC) and a solute-binding protein (MglB).

Its subcellular location is the cell membrane. The catalysed reaction is D-galactose(out) + ATP + H2O = D-galactose(in) + ADP + phosphate + H(+). The enzyme catalyses methyl beta-D-galactoside(out) + ATP + H2O = methyl beta-D-galactoside(in) + ADP + phosphate + H(+). Functionally, part of the ABC transporter complex MglABC involved in galactose/methyl galactoside import. Responsible for energy coupling to the transport system. The polypeptide is Galactose/methyl galactoside import ATP-binding protein MglA (Clostridium perfringens (strain ATCC 13124 / DSM 756 / JCM 1290 / NCIMB 6125 / NCTC 8237 / Type A)).